Consider the following 396-residue polypeptide: Elongation factor Tu (396 aa).

A tr-type G domain is found at 11–205 (KPHVNIGTIG…VVDEYIPTPK (195 aa)). The interval 20-27 (GHVDHGKT) is G1. 20–27 (GHVDHGKT) contributes to the GTP binding site. Threonine 27 serves as a coordination point for Mg(2+). Residues 61-65 (GITIN) are G2. The tract at residues 82-85 (DAPG) is G3. Residues 82–86 (DAPGH) and 137–140 (NKTD) contribute to the GTP site. Residues 137–140 (NKTD) are G4. Residues 175–177 (SAL) form a G5 region.

It belongs to the TRAFAC class translation factor GTPase superfamily. Classic translation factor GTPase family. EF-Tu/EF-1A subfamily. In terms of assembly, monomer.

The protein localises to the cytoplasm. It catalyses the reaction GTP + H2O = GDP + phosphate + H(+). Functionally, GTP hydrolase that promotes the GTP-dependent binding of aminoacyl-tRNA to the A-site of ribosomes during protein biosynthesis. This Limosilactobacillus fermentum (strain NBRC 3956 / LMG 18251) (Lactobacillus fermentum) protein is Elongation factor Tu.